Consider the following 182-residue polypeptide: ATP-dependent protease subunit HslV (182 aa).

Residue Thr-6 is part of the active site. Residues Ala-164, Cys-167, and Thr-170 each coordinate Na(+).

Belongs to the peptidase T1B family. HslV subfamily. A double ring-shaped homohexamer of HslV is capped on each side by a ring-shaped HslU homohexamer. The assembly of the HslU/HslV complex is dependent on binding of ATP.

It is found in the cytoplasm. The catalysed reaction is ATP-dependent cleavage of peptide bonds with broad specificity.. Allosterically activated by HslU binding. Functionally, protease subunit of a proteasome-like degradation complex believed to be a general protein degrading machinery. The sequence is that of ATP-dependent protease subunit HslV from Borreliella burgdorferi (strain ATCC 35210 / DSM 4680 / CIP 102532 / B31) (Borrelia burgdorferi).